The chain runs to 508 residues: UDP-N-acetylmuramoyl-L-alanyl-D-glutamate--L-lysine ligase (508 aa).

S47 is a UDP-N-acetyl-alpha-D-muramoyl-L-alanyl-D-glutamate binding site. 124–130 (GTKGKTT) contributes to the ATP binding site. UDP-N-acetyl-alpha-D-muramoyl-L-alanyl-D-glutamate contacts are provided by residues 168 to 169 (TT), S195, and R203. At K237 the chain carries N6-carboxylysine. The L-lysine recognition motif signature appears at 425–428 (DDPA).

Belongs to the MurCDEF family. MurE subfamily. In terms of processing, carboxylation is probably crucial for Mg(2+) binding and, consequently, for the gamma-phosphate positioning of ATP.

The protein localises to the cytoplasm. It catalyses the reaction UDP-N-acetyl-alpha-D-muramoyl-L-alanyl-D-glutamate + L-lysine + ATP = UDP-N-acetyl-alpha-D-muramoyl-L-alanyl-gamma-D-glutamyl-L-lysine + ADP + phosphate + H(+). The protein operates within cell wall biogenesis; peptidoglycan biosynthesis. Catalyzes the addition of L-lysine to the nucleotide precursor UDP-N-acetylmuramoyl-L-alanyl-D-glutamate (UMAG) in the biosynthesis of bacterial cell-wall peptidoglycan. In Enterococcus faecalis (strain ATCC 700802 / V583), this protein is UDP-N-acetylmuramoyl-L-alanyl-D-glutamate--L-lysine ligase.